Reading from the N-terminus, the 32-residue chain is Sodium channel neurotoxin BmK NT2 (32 aa).

The LCN-type CS-alpha/beta domain maps to R2 to T32.

In terms of tissue distribution, expressed by the venom gland.

The protein localises to the secreted. Functionally, alpha toxins bind voltage-independently at site-3 of sodium channels (Nav) and inhibit the inactivation of the activated channels, thereby blocking neuronal transmission. This toxin dose-dependently delays inactivation of voltage-gated sodium channels (Nav) (EC(50)=0.91 uM), and shifts the steady-state activation and inactivation to hyperpolarized direction. In addition, it dose-dependently alters calcium dynamics and increases phosphorylation of MAP kinases 1/3 (MAPK1/MAPK3) and cAMP-response element binding (CREB) proteins in neocortical neurons. This effect is eliminated by tetrodotoxin, a Nav blocker. The polypeptide is Sodium channel neurotoxin BmK NT2 (Olivierus martensii (Manchurian scorpion)).